Consider the following 915-residue polypeptide: Alanine--tRNA ligase (915 aa).

H605, H609, C709, and H713 together coordinate Zn(2+). A disordered region spans residues 882–901 (GGGGDERLAQGGGRNPDGLT).

The protein belongs to the class-II aminoacyl-tRNA synthetase family. It depends on Zn(2+) as a cofactor.

The protein localises to the cytoplasm. The catalysed reaction is tRNA(Ala) + L-alanine + ATP = L-alanyl-tRNA(Ala) + AMP + diphosphate. Catalyzes the attachment of alanine to tRNA(Ala) in a two-step reaction: alanine is first activated by ATP to form Ala-AMP and then transferred to the acceptor end of tRNA(Ala). Also edits incorrectly charged Ser-tRNA(Ala) and Gly-tRNA(Ala) via its editing domain. This is Alanine--tRNA ligase from Methanopyrus kandleri (strain AV19 / DSM 6324 / JCM 9639 / NBRC 100938).